The primary structure comprises 127 residues: MAKPTRKRRVKKDIESGVAHIHATFNNTIVMITDVHGNALAWSSAGALGFKGSRKSTPFAAQMAAEAAAKSAQEHGLKTVEVTVKGPGSGRESAIRALAAAGLEVTAIRDVTPVPHNGARPPKRRRV.

This sequence belongs to the universal ribosomal protein uS11 family. As to quaternary structure, part of the 30S ribosomal subunit. Interacts with proteins S7 and S18. Binds to IF-3.

Functionally, located on the platform of the 30S subunit, it bridges several disparate RNA helices of the 16S rRNA. Forms part of the Shine-Dalgarno cleft in the 70S ribosome. This Streptococcus pyogenes serotype M1 protein is Small ribosomal subunit protein uS11.